Here is a 457-residue protein sequence, read N- to C-terminus: NADP-specific glutamate dehydrogenase (457 aa).

The active site involves Lys-111.

The protein belongs to the Glu/Leu/Phe/Val dehydrogenases family. Homohexamer.

The enzyme catalyses L-glutamate + NADP(+) + H2O = 2-oxoglutarate + NH4(+) + NADPH + H(+). The protein is NADP-specific glutamate dehydrogenase (gdhA) of Agaricus bisporus (White button mushroom).